The chain runs to 85 residues: Large ribosomal subunit protein bL27 (85 aa).

It belongs to the bacterial ribosomal protein bL27 family.

This is Large ribosomal subunit protein bL27 from Xylella fastidiosa (strain 9a5c).